Here is a 705-residue protein sequence, read N- to C-terminus: Ribosomal RNA large subunit methyltransferase K/L (705 aa).

The region spanning 43 to 154 (VVYRCCLWSR…GEKGILGFDL (112 aa)) is the THUMP domain.

The protein belongs to the methyltransferase superfamily. RlmKL family.

The protein localises to the cytoplasm. The catalysed reaction is guanosine(2445) in 23S rRNA + S-adenosyl-L-methionine = N(2)-methylguanosine(2445) in 23S rRNA + S-adenosyl-L-homocysteine + H(+). It carries out the reaction guanosine(2069) in 23S rRNA + S-adenosyl-L-methionine = N(2)-methylguanosine(2069) in 23S rRNA + S-adenosyl-L-homocysteine + H(+). In terms of biological role, specifically methylates the guanine in position 2445 (m2G2445) and the guanine in position 2069 (m7G2069) of 23S rRNA. This is Ribosomal RNA large subunit methyltransferase K/L from Aliivibrio salmonicida (strain LFI1238) (Vibrio salmonicida (strain LFI1238)).